The chain runs to 285 residues: Guanylate kinase 2, chloroplastic/mitochondrial (285 aa).

The segment covering 1–19 has biased composition (low complexity); sequence MLLTRRFSSALARSPLLPR. The transit peptide at 1–42 directs the protein to the chloroplast and mitochondrion; that stretch reads MLLTRRFSSALARSPLLPRSLPPPRAVPATPPAPRPPPRRLM. The interval 1-66 is disordered; sequence MLLTRRFSSA…PPPPSGADKD (66 aa). The span at 20–36 shows a compositional bias: pro residues; the sequence is SLPPPRAVPATPPAPRP. A compositionally biased stretch (low complexity) spans 40–50; the sequence is RLMSSSSSGWH. In terms of domain architecture, Guanylate kinase-like spans 91 to 272; it reads PMILVISGPS…AVKQVESIID (182 aa). Residue 98-105 coordinates ATP; it reads GPSGVGKD. Catalysis depends on residues Arg130, Arg224, and Arg235. Residue Asn255 coordinates ATP.

It belongs to the guanylate kinase family. Monomer.

The protein resides in the plastid. The protein localises to the chloroplast. Its subcellular location is the mitochondrion. It catalyses the reaction GMP + ATP = GDP + ADP. In terms of biological role, essential for recycling GMP and indirectly, cGMP. Essential for chloroplast differentiation at early stage of leaf development. May not be involved in the synthesis and maintenance of the organellar DNA during leaf development. In Oryza sativa subsp. japonica (Rice), this protein is Guanylate kinase 2, chloroplastic/mitochondrial (V2).